The following is a 421-amino-acid chain: Gamma-glutamyl phosphate reductase (421 aa).

This sequence belongs to the gamma-glutamyl phosphate reductase family.

The protein resides in the cytoplasm. It carries out the reaction L-glutamate 5-semialdehyde + phosphate + NADP(+) = L-glutamyl 5-phosphate + NADPH + H(+). Its pathway is amino-acid biosynthesis; L-proline biosynthesis; L-glutamate 5-semialdehyde from L-glutamate: step 2/2. Its function is as follows. Catalyzes the NADPH-dependent reduction of L-glutamate 5-phosphate into L-glutamate 5-semialdehyde and phosphate. The product spontaneously undergoes cyclization to form 1-pyrroline-5-carboxylate. The sequence is that of Gamma-glutamyl phosphate reductase from Brucella abortus (strain 2308).